The following is a 40-amino-acid chain: MADTTGRIPLWLIGTVTGIAVIGLIGVFFYGSYSGLGSSL.

The chain crosses the membrane as a helical span at residues 8–28 (IPLWLIGTVTGIAVIGLIGVF).

It belongs to the PsbJ family. In terms of assembly, PSII is composed of 1 copy each of membrane proteins PsbA, PsbB, PsbC, PsbD, PsbE, PsbF, PsbH, PsbI, PsbJ, PsbK, PsbL, PsbM, PsbT, PsbX, PsbY, PsbZ, Psb30/Ycf12, at least 3 peripheral proteins of the oxygen-evolving complex and a large number of cofactors. It forms dimeric complexes.

The protein localises to the plastid. The protein resides in the chloroplast thylakoid membrane. In terms of biological role, one of the components of the core complex of photosystem II (PSII). PSII is a light-driven water:plastoquinone oxidoreductase that uses light energy to abstract electrons from H(2)O, generating O(2) and a proton gradient subsequently used for ATP formation. It consists of a core antenna complex that captures photons, and an electron transfer chain that converts photonic excitation into a charge separation. The chain is Photosystem II reaction center protein J from Oryza nivara (Indian wild rice).